We begin with the raw amino-acid sequence, 288 residues long: Acetyl-coenzyme A carboxylase carboxyl transferase subunit beta (288 aa).

The CoA carboxyltransferase N-terminal domain maps to 32-288 (LLLICPKCKK…ILMLHNVEAR (257 aa)). C36, C39, C55, and C58 together coordinate Zn(2+). The C4-type zinc-finger motif lies at 36 to 58 (CPKCKKTLLKSELADNLDVCREC).

The protein belongs to the AccD/PCCB family. Acetyl-CoA carboxylase is a heterohexamer composed of biotin carboxyl carrier protein (AccB), biotin carboxylase (AccC) and two subunits each of ACCase subunit alpha (AccA) and ACCase subunit beta (AccD). Zn(2+) is required as a cofactor.

The protein localises to the cytoplasm. It catalyses the reaction N(6)-carboxybiotinyl-L-lysyl-[protein] + acetyl-CoA = N(6)-biotinyl-L-lysyl-[protein] + malonyl-CoA. Its pathway is lipid metabolism; malonyl-CoA biosynthesis; malonyl-CoA from acetyl-CoA: step 1/1. In terms of biological role, component of the acetyl coenzyme A carboxylase (ACC) complex. Biotin carboxylase (BC) catalyzes the carboxylation of biotin on its carrier protein (BCCP) and then the CO(2) group is transferred by the transcarboxylase to acetyl-CoA to form malonyl-CoA. The polypeptide is Acetyl-coenzyme A carboxylase carboxyl transferase subunit beta (Ruminiclostridium cellulolyticum (strain ATCC 35319 / DSM 5812 / JCM 6584 / H10) (Clostridium cellulolyticum)).